A 271-amino-acid chain; its full sequence is Tryptophan synthase alpha chain (271 aa).

Residues E59 and D70 each act as proton acceptor in the active site.

Belongs to the TrpA family. In terms of assembly, tetramer of two alpha and two beta chains.

The catalysed reaction is (1S,2R)-1-C-(indol-3-yl)glycerol 3-phosphate + L-serine = D-glyceraldehyde 3-phosphate + L-tryptophan + H2O. Its pathway is amino-acid biosynthesis; L-tryptophan biosynthesis; L-tryptophan from chorismate: step 5/5. Functionally, the alpha subunit is responsible for the aldol cleavage of indoleglycerol phosphate to indole and glyceraldehyde 3-phosphate. In Methanosarcina mazei (strain ATCC BAA-159 / DSM 3647 / Goe1 / Go1 / JCM 11833 / OCM 88) (Methanosarcina frisia), this protein is Tryptophan synthase alpha chain.